The following is a 128-amino-acid chain: Large ribosomal subunit protein bL17 (128 aa).

The protein belongs to the bacterial ribosomal protein bL17 family. In terms of assembly, part of the 50S ribosomal subunit. Contacts protein L32.

This chain is Large ribosomal subunit protein bL17, found in Streptococcus agalactiae serotype Ia (strain ATCC 27591 / A909 / CDC SS700).